The following is a 288-amino-acid chain: Bifunctional protein FolD (288 aa).

NADP(+) contacts are provided by residues G166–S168, S191, and V232.

Belongs to the tetrahydrofolate dehydrogenase/cyclohydrolase family. In terms of assembly, homodimer.

The catalysed reaction is (6R)-5,10-methylene-5,6,7,8-tetrahydrofolate + NADP(+) = (6R)-5,10-methenyltetrahydrofolate + NADPH. It carries out the reaction (6R)-5,10-methenyltetrahydrofolate + H2O = (6R)-10-formyltetrahydrofolate + H(+). It participates in one-carbon metabolism; tetrahydrofolate interconversion. In terms of biological role, catalyzes the oxidation of 5,10-methylenetetrahydrofolate to 5,10-methenyltetrahydrofolate and then the hydrolysis of 5,10-methenyltetrahydrofolate to 10-formyltetrahydrofolate. The sequence is that of Bifunctional protein FolD from Roseiflexus castenholzii (strain DSM 13941 / HLO8).